An 828-amino-acid chain; its full sequence is E3 ubiquitin-protein ligase bre-1 (828 aa).

Residues 1-25 (MMKRNNEGIGGEGVANSPPDDTQQK) form a disordered region. The tract at residues 1–309 (MMKRNNEGIG…SREIEALRAD (309 aa)) is interaction with ubc-1. Coiled coils occupy residues 53–92 (QAAK…FLKV) and 185–251 (HKEL…TEKQ). The span at 269 to 298 (ASGNATASSSATLNQSEKKMGSPGSPPSES) shows a compositional bias: low complexity. Residues 269-304 (ASGNATASSSATLNQSEKKMGSPGSPPSESTSREIE) are disordered. Coiled-coil stretches lie at residues 311–345 (DEQA…KMET), 460–616 (VNTL…RNLK), and 660–756 (DEVL…NDSA). An RING-type zinc finger spans residues 776 to 815 (CPSCKTRPKDCIMLKCYHLFCETCIKTMYDTRQRKCPKCN).

The protein belongs to the BRE1 family. As to quaternary structure, interacts with ubc-1. Interacts with mrg-1.

It localises to the nucleus. The enzyme catalyses S-ubiquitinyl-[E2 ubiquitin-conjugating enzyme]-L-cysteine + [acceptor protein]-L-lysine = [E2 ubiquitin-conjugating enzyme]-L-cysteine + N(6)-ubiquitinyl-[acceptor protein]-L-lysine.. It participates in protein modification; protein ubiquitination. Functionally, E3 ubiquitin-protein ligase that mediates monoubiquitination of 'Lys-117' of histone H2B. H2B 'Lys-117' ubiquitination gives a specific tag for epigenetic transcriptional activation and is also prerequisite for histone H3 'Lys-4' and 'Lys-79' methylation. Involved in regulating stem cell proliferative fate. The protein is E3 ubiquitin-protein ligase bre-1 of Caenorhabditis briggsae.